The following is a 220-amino-acid chain: MMRGTPQMPEAIATRKYFDREFDRQAIKLLPNEYYVTAEDVVLTTVLGSCVSACIRDEVAGVGGMNHFMLPDDENAGADRMLSTSMRYGCYALEVLINELLKMGARRERLEAKVFGGGAVLANMTTLNIGDRNADFVLKYLRTEEVRVAAQDLRGPHARRVSYFPRTGLALVRRLTRQDDTVGIEREERALARALSTSTKAPARGAVELFTRQTTARIPT.

It belongs to the CheD family.

It catalyses the reaction L-glutaminyl-[protein] + H2O = L-glutamyl-[protein] + NH4(+). In terms of biological role, probably deamidates glutamine residues to glutamate on methyl-accepting chemotaxis receptors (MCPs), playing an important role in chemotaxis. The polypeptide is Probable chemoreceptor glutamine deamidase CheD (Cupriavidus metallidurans (strain ATCC 43123 / DSM 2839 / NBRC 102507 / CH34) (Ralstonia metallidurans)).